The following is a 49-amino-acid chain: Large ribosomal subunit protein bL33 (49 aa).

It belongs to the bacterial ribosomal protein bL33 family.

The polypeptide is Large ribosomal subunit protein bL33 (Moorella thermoacetica (strain ATCC 39073 / JCM 9320)).